The sequence spans 812 residues: ISWI one complex protein 2 (812 aa).

4 disordered regions span residues 1-21 (MRTKRTRGTRNVGASMPAGAA), 614-646 (MGNSHGNRRSSRRPQSTLEPSTKSSRPTDKRKP), 679-704 (AKQRKQQEDRERRKKMKEEKKRLEEL), and 762-812 (QTGS…PPTN). A compositionally biased stretch (polar residues) spans 627 to 638 (PQSTLEPSTKSS). Residues 673-714 (ELKIIRAKQRKQQEDRERRKKMKEEKKRLEELAKKRELTESV) adopt a coiled-coil conformation. The span at 683 to 704 (KQQEDRERRKKMKEEKKRLEEL) shows a compositional bias: basic and acidic residues. A compositionally biased stretch (low complexity) spans 769–796 (PQAPQAPQTSQASIQPQQQQQQQQQQQP).

In terms of assembly, component of the ISW1B complex, which at least consists of ISW1, IOC2 and IOC4.

Its subcellular location is the nucleus. In terms of biological role, functions as a component of the ISW1B complex, which acts in remodeling the chromatin by catalyzing an ATP-dependent alteration in the structure of nucleosomal DNA. The ISW1B complex acts within coding regions to control the amount of RNA polymerase II released into productive elongation and to coordinate elongation with termination and pre-mRNA processing. This Saccharomyces cerevisiae (strain ATCC 204508 / S288c) (Baker's yeast) protein is ISWI one complex protein 2 (IOC2).